A 240-amino-acid chain; its full sequence is UDP-2,3-diacylglucosamine hydrolase (240 aa).

Residues aspartate 8, histidine 10, aspartate 41, asparagine 79, and histidine 114 each coordinate Mn(2+). Residue 79–80 coordinates substrate; sequence NR. Substrate-binding residues include aspartate 122, serine 160, asparagine 164, lysine 167, and histidine 195. Residues histidine 195 and histidine 197 each coordinate Mn(2+).

It belongs to the LpxH family. Mn(2+) serves as cofactor.

It is found in the cell inner membrane. The enzyme catalyses UDP-2-N,3-O-bis[(3R)-3-hydroxytetradecanoyl]-alpha-D-glucosamine + H2O = 2-N,3-O-bis[(3R)-3-hydroxytetradecanoyl]-alpha-D-glucosaminyl 1-phosphate + UMP + 2 H(+). It functions in the pathway glycolipid biosynthesis; lipid IV(A) biosynthesis; lipid IV(A) from (3R)-3-hydroxytetradecanoyl-[acyl-carrier-protein] and UDP-N-acetyl-alpha-D-glucosamine: step 4/6. Functionally, hydrolyzes the pyrophosphate bond of UDP-2,3-diacylglucosamine to yield 2,3-diacylglucosamine 1-phosphate (lipid X) and UMP by catalyzing the attack of water at the alpha-P atom. Involved in the biosynthesis of lipid A, a phosphorylated glycolipid that anchors the lipopolysaccharide to the outer membrane of the cell. The sequence is that of UDP-2,3-diacylglucosamine hydrolase from Klebsiella pneumoniae subsp. pneumoniae (strain ATCC 700721 / MGH 78578).